The chain runs to 182 residues: Small ribosomal subunit protein uS4c (182 aa).

Residues 82-143 (MRLDNILFRL…KERSKVLIQN (62 aa)) enclose the S4 RNA-binding domain.

Belongs to the universal ribosomal protein uS4 family. Part of the 30S ribosomal subunit. Contacts protein S5. The interaction surface between S4 and S5 is involved in control of translational fidelity.

Its subcellular location is the plastid. It is found in the chloroplast. Its function is as follows. One of the primary rRNA binding proteins, it binds directly to 16S rRNA where it nucleates assembly of the body of the 30S subunit. With S5 and S12 plays an important role in translational accuracy. The polypeptide is Small ribosomal subunit protein uS4c (rps4) (Tigridia sp. (strain Lejeune 1997)).